The sequence spans 553 residues: Dihydroxy-acid dehydratase (553 aa).

Residue Asp78 coordinates Mg(2+). Cys119 lines the [2Fe-2S] cluster pocket. Residues Asp120 and Lys121 each coordinate Mg(2+). The residue at position 121 (Lys121) is an N6-carboxylysine. Position 191 (Cys191) interacts with [2Fe-2S] cluster. Glu444 lines the Mg(2+) pocket. Ser470 serves as the catalytic Proton acceptor.

The protein belongs to the IlvD/Edd family. In terms of assembly, homodimer. Requires [2Fe-2S] cluster as cofactor. The cofactor is Mg(2+).

It catalyses the reaction (2R)-2,3-dihydroxy-3-methylbutanoate = 3-methyl-2-oxobutanoate + H2O. It carries out the reaction (2R,3R)-2,3-dihydroxy-3-methylpentanoate = (S)-3-methyl-2-oxopentanoate + H2O. It functions in the pathway amino-acid biosynthesis; L-isoleucine biosynthesis; L-isoleucine from 2-oxobutanoate: step 3/4. The protein operates within amino-acid biosynthesis; L-valine biosynthesis; L-valine from pyruvate: step 3/4. Functionally, functions in the biosynthesis of branched-chain amino acids. Catalyzes the dehydration of (2R,3R)-2,3-dihydroxy-3-methylpentanoate (2,3-dihydroxy-3-methylvalerate) into 2-oxo-3-methylpentanoate (2-oxo-3-methylvalerate) and of (2R)-2,3-dihydroxy-3-methylbutanoate (2,3-dihydroxyisovalerate) into 2-oxo-3-methylbutanoate (2-oxoisovalerate), the penultimate precursor to L-isoleucine and L-valine, respectively. The protein is Dihydroxy-acid dehydratase of Methanococcoides burtonii (strain DSM 6242 / NBRC 107633 / OCM 468 / ACE-M).